The chain runs to 494 residues: Aspartyl/glutamyl-tRNA(Asn/Gln) amidotransferase subunit B (494 aa).

This sequence belongs to the GatB/GatE family. GatB subfamily. Heterotrimer of A, B and C subunits.

It carries out the reaction L-glutamyl-tRNA(Gln) + L-glutamine + ATP + H2O = L-glutaminyl-tRNA(Gln) + L-glutamate + ADP + phosphate + H(+). The catalysed reaction is L-aspartyl-tRNA(Asn) + L-glutamine + ATP + H2O = L-asparaginyl-tRNA(Asn) + L-glutamate + ADP + phosphate + 2 H(+). In terms of biological role, allows the formation of correctly charged Asn-tRNA(Asn) or Gln-tRNA(Gln) through the transamidation of misacylated Asp-tRNA(Asn) or Glu-tRNA(Gln) in organisms which lack either or both of asparaginyl-tRNA or glutaminyl-tRNA synthetases. The reaction takes place in the presence of glutamine and ATP through an activated phospho-Asp-tRNA(Asn) or phospho-Glu-tRNA(Gln). The chain is Aspartyl/glutamyl-tRNA(Asn/Gln) amidotransferase subunit B from Rhodopseudomonas palustris (strain BisA53).